Here is a 121-residue protein sequence, read N- to C-terminus: Basic phospholipase A2 daboxin P (121 aa).

Intrachain disulfides connect Cys26-Cys115, Cys28-Cys44, Cys43-Cys95, Cys49-Cys121, Cys50-Cys88, Cys57-Cys81, and Cys75-Cys86. Residues Tyr27, Gly29, and Gly31 each coordinate Ca(2+). His47 is a catalytic residue. Asp48 lines the Ca(2+) pocket. Asp89 is a catalytic residue.

Ca(2+) serves as cofactor. Expressed by the venom gland.

The protein localises to the secreted. It catalyses the reaction a 1,2-diacyl-sn-glycero-3-phosphocholine + H2O = a 1-acyl-sn-glycero-3-phosphocholine + a fatty acid + H(+). Snake venom phospholipase A2 (PLA2) that exhibits anticoagulant activity, probably by binding to factor X and its activated form factor Xa (F10). Shows no cytotoxicity. PLA2 catalyzes the calcium-dependent hydrolysis of the 2-acyl groups in 3-sn-phosphoglycerides. The chain is Basic phospholipase A2 daboxin P from Daboia russelii (Russel's viper).